We begin with the raw amino-acid sequence, 278 residues long: Acetyl-coenzyme A carboxylase carboxyl transferase subunit beta (278 aa).

The region spanning 23–278 is the CoA carboxyltransferase N-terminal domain; that stretch reads LWSKCDSCGA…QLIKLLGHMK (256 aa). Residues cysteine 27, cysteine 30, cysteine 46, and cysteine 49 each contribute to the Zn(2+) site. Residues 27–49 form a C4-type zinc finger; it reads CDSCGAALHKKQLEDHLYTCPHC.

This sequence belongs to the AccD/PCCB family. Acetyl-CoA carboxylase is a heterohexamer composed of biotin carboxyl carrier protein (AccB), biotin carboxylase (AccC) and two subunits each of ACCase subunit alpha (AccA) and ACCase subunit beta (AccD). Zn(2+) serves as cofactor.

The protein resides in the cytoplasm. The catalysed reaction is N(6)-carboxybiotinyl-L-lysyl-[protein] + acetyl-CoA = N(6)-biotinyl-L-lysyl-[protein] + malonyl-CoA. It participates in lipid metabolism; malonyl-CoA biosynthesis; malonyl-CoA from acetyl-CoA: step 1/1. Functionally, component of the acetyl coenzyme A carboxylase (ACC) complex. Biotin carboxylase (BC) catalyzes the carboxylation of biotin on its carrier protein (BCCP) and then the CO(2) group is transferred by the transcarboxylase to acetyl-CoA to form malonyl-CoA. The sequence is that of Acetyl-coenzyme A carboxylase carboxyl transferase subunit beta from Chlorobaculum tepidum (strain ATCC 49652 / DSM 12025 / NBRC 103806 / TLS) (Chlorobium tepidum).